The primary structure comprises 308 residues: Cytochrome c biogenesis protein CcsA (308 aa).

7 helical membrane passes run 2–22 (IVSTLEHILTHISLSIVSILI), 44–64 (GMLITFLCITGLLANNWIYLG), 71–91 (LSESLIFLSWSFALIHSIGYF), 143–163 (MILGYAALLCGSLLSVALMVI), 212–232 (VISLGFIFLTIGILSGAVWAN), 247–267 (WAFITWIVFAIYLHTRININL), and 273–293 (AIVASLGFIIIWICYFGVNLV).

The protein belongs to the CcmF/CycK/Ccl1/NrfE/CcsA family. In terms of assembly, may interact with Ccs1.

Its subcellular location is the plastid membrane. In terms of biological role, required during biogenesis of c-type cytochromes (cytochrome c6 and cytochrome f) at the step of heme attachment. In Cuscuta reflexa (Southern Asian dodder), this protein is Cytochrome c biogenesis protein CcsA.